Here is a 371-residue protein sequence, read N- to C-terminus: N-methyl-L-tryptophan oxidase (371 aa).

4–34 (DLIVIGSGSVGSAAGYYASQAGLNVLMIDSA) lines the FAD pocket. Residue C307 is modified to S-8alpha-FAD cysteine.

This sequence belongs to the MSOX/MTOX family. MTOX subfamily. Monomer. The cofactor is FAD.

The catalysed reaction is N(alpha)-methyl-L-tryptophan + O2 + H2O = L-tryptophan + formaldehyde + H2O2. Catalyzes the oxidative demethylation of N-methyl-L-tryptophan. This chain is N-methyl-L-tryptophan oxidase, found in Yersinia pseudotuberculosis serotype O:1b (strain IP 31758).